The sequence spans 410 residues: Cysteine desulfurase IscS (410 aa).

Pyridoxal 5'-phosphate contacts are provided by residues 79 to 80, N159, Q187, and 207 to 209; these read AT and SGH. An N6-(pyridoxal phosphate)lysine modification is found at K210. Residue T248 coordinates pyridoxal 5'-phosphate. The active-site Cysteine persulfide intermediate is C334. Residue C334 coordinates [2Fe-2S] cluster.

It belongs to the class-V pyridoxal-phosphate-dependent aminotransferase family. NifS/IscS subfamily. As to quaternary structure, homodimer. Forms a heterotetramer with IscU, interacts with other sulfur acceptors. Requires pyridoxal 5'-phosphate as cofactor.

It is found in the cytoplasm. It catalyses the reaction (sulfur carrier)-H + L-cysteine = (sulfur carrier)-SH + L-alanine. It functions in the pathway cofactor biosynthesis; iron-sulfur cluster biosynthesis. In terms of biological role, master enzyme that delivers sulfur to a number of partners involved in Fe-S cluster assembly, tRNA modification or cofactor biosynthesis. Catalyzes the removal of elemental sulfur atoms from cysteine to produce alanine. Functions as a sulfur delivery protein for Fe-S cluster synthesis onto IscU, an Fe-S scaffold assembly protein, as well as other S acceptor proteins. The protein is Cysteine desulfurase IscS of Ehrlichia chaffeensis (strain ATCC CRL-10679 / Arkansas).